Here is a 753-residue protein sequence, read N- to C-terminus: Neuroendocrine convertase 1 (753 aa).

The signal sequence occupies residues 1-27 (MGRRAWTLQCTAFSLFCAWCAMNSVKA). Residues 28-110 (KKQFVNEWAA…QQYEKERSKR (83 aa)) constitute a propeptide that is removed on maturation. One can recognise a Peptidase S8 domain in the interval 129-450 (QWYLQDTRMT…FGLLNAKALV (322 aa)). Residue Asp-167 is the Charge relay system of the active site. N-linked (GlcNAc...) asparagine glycosylation is present at Asn-173. Catalysis depends on His-208, which acts as the Charge relay system. 2 disulfide bridges follow: Cys-225–Cys-374 and Cys-317–Cys-347. Catalysis depends on Ser-382, which acts as the Charge relay system. N-linked (GlcNAc...) asparagine glycosylation occurs at Asn-401. The P/Homo B domain occupies 460-597 (SVPEKKECVV…KLILHGTSSQ (138 aa)). Cysteines 467 and 494 form a disulfide. 2 disordered regions span residues 617-657 (RRGV…RRDE) and 676-695 (SKNS…KPNI).

Belongs to the peptidase S8 family. Furin subfamily. It depends on Ca(2+) as a cofactor.

It is found in the cytoplasmic vesicle. The protein localises to the secretory vesicle. The catalysed reaction is Release of protein hormones, neuropeptides and renin from their precursors, generally by hydrolysis of -Lys-Arg-|- bonds.. In terms of biological role, involved in the processing of hormone and other protein precursors at sites comprised of pairs of basic amino acid residues. Substrates include POMC, renin, enkephalin, dynorphin, somatostatin, insulin and AGRP. This is Neuroendocrine convertase 1 (PCSK1) from Bos taurus (Bovine).